The following is a 348-amino-acid chain: Alcohol dehydrogenase 2 (348 aa).

Residues cysteine 44, histidine 67, cysteine 98, cysteine 101, cysteine 104, cysteine 112, and cysteine 154 each contribute to the Zn(2+) site. Residues 178-184 (GAAGGLG), aspartate 202, lysine 207, 269-271 (VGL), and arginine 341 contribute to the NAD(+) site.

The protein belongs to the zinc-containing alcohol dehydrogenase family. Homotetramer. The cofactor is Zn(2+).

The protein localises to the cytoplasm. It catalyses the reaction a primary alcohol + NAD(+) = an aldehyde + NADH + H(+). The enzyme catalyses a secondary alcohol + NAD(+) = a ketone + NADH + H(+). This Candida albicans (strain SC5314 / ATCC MYA-2876) (Yeast) protein is Alcohol dehydrogenase 2 (ADH2).